Here is a 250-residue protein sequence, read N- to C-terminus: uncharacterized protein (250 aa).

Positions 207–226 are enriched in basic and acidic residues; the sequence is LNDRDAINKSEEARKAREEV. The interval 207 to 250 is disordered; it reads LNDRDAINKSEEARKAREEVFIPSEPSKPSIASKRSSASKSTKS. The segment covering 233–250 has biased composition (low complexity); sequence SKPSIASKRSSASKSTKS.

The protein resides in the plastid. The protein localises to the chloroplast. This is an uncharacterized protein from Chlorella vulgaris (Green alga).